A 736-amino-acid polypeptide reads, in one-letter code: Factor of DNA methylation 4 (736 aa).

Composition is skewed to basic and acidic residues over residues 80-90 and 144-167; these read RKYLRPRERPR and DSGR…SNED. A disordered region spans residues 80–167; sequence RKYLRPRERP…KPDPFFSNED (88 aa). Residues 360-597 adopt a coiled-coil conformation; the sequence is TLVSNLENTL…RSMRELTTRA (238 aa).

Its function is as follows. Acts in association with FDM3 and FDM5 for RNA-directed DNA methylation (RdDM). The chain is Factor of DNA methylation 4 from Arabidopsis thaliana (Mouse-ear cress).